Here is a 272-residue protein sequence, read N- to C-terminus: 3-methyl-2-oxobutanoate hydroxymethyltransferase (272 aa).

Residues Asp-51 and Asp-90 each coordinate Mg(2+). Residues 51–52 (DS), Asp-90, and Lys-118 contribute to the 3-methyl-2-oxobutanoate site. Glu-120 lines the Mg(2+) pocket. Catalysis depends on Glu-187, which acts as the Proton acceptor.

Belongs to the PanB family. Homodecamer; pentamer of dimers. Mg(2+) is required as a cofactor.

Its subcellular location is the cytoplasm. It carries out the reaction 3-methyl-2-oxobutanoate + (6R)-5,10-methylene-5,6,7,8-tetrahydrofolate + H2O = 2-dehydropantoate + (6S)-5,6,7,8-tetrahydrofolate. It participates in cofactor biosynthesis; (R)-pantothenate biosynthesis; (R)-pantoate from 3-methyl-2-oxobutanoate: step 1/2. Catalyzes the reversible reaction in which hydroxymethyl group from 5,10-methylenetetrahydrofolate is transferred onto alpha-ketoisovalerate to form ketopantoate. In Xylella fastidiosa (strain 9a5c), this protein is 3-methyl-2-oxobutanoate hydroxymethyltransferase.